Here is a 241-residue protein sequence, read N- to C-terminus: Triosephosphate isomerase (241 aa).

9–11 is a binding site for substrate; the sequence is NWK. The active-site Electrophile is histidine 96. Glutamate 165 serves as the catalytic Proton acceptor. Residues glycine 171, serine 204, and 225 to 226 each bind substrate; that span reads GG.

It belongs to the triosephosphate isomerase family. Homodimer.

The protein localises to the cytoplasm. The enzyme catalyses D-glyceraldehyde 3-phosphate = dihydroxyacetone phosphate. It functions in the pathway carbohydrate biosynthesis; gluconeogenesis. It participates in carbohydrate degradation; glycolysis; D-glyceraldehyde 3-phosphate from glycerone phosphate: step 1/1. Involved in the gluconeogenesis. Catalyzes stereospecifically the conversion of dihydroxyacetone phosphate (DHAP) to D-glyceraldehyde-3-phosphate (G3P). The sequence is that of Triosephosphate isomerase from Gloeothece citriformis (strain PCC 7424) (Cyanothece sp. (strain PCC 7424)).